A 205-amino-acid chain; its full sequence is 2-dehydro-3-deoxy-6-phosphogalactonate aldolase (205 aa).

2-dehydro-3-deoxy-6-phospho-D-galactonate is bound at residue arginine 14. Glutamate 37 acts as the Proton donor/acceptor in catalysis. Threonine 66, lysine 126, glycine 156, glycine 176, and serine 177 together coordinate 2-dehydro-3-deoxy-6-phospho-D-galactonate. Lysine 126 serves as the catalytic Schiff-base intermediate with substrate.

Belongs to the KHG/KDPG aldolase family. As to quaternary structure, homotrimer.

The enzyme catalyses 2-dehydro-3-deoxy-6-phospho-D-galactonate = D-glyceraldehyde 3-phosphate + pyruvate. Its pathway is carbohydrate acid metabolism; D-galactonate degradation; D-glyceraldehyde 3-phosphate and pyruvate from D-galactonate: step 3/3. Involved in the degradation of galactose via the DeLey-Doudoroff pathway. Catalyzes the reversible, stereospecific retro-aldol cleavage of 2-keto-3-deoxy-6-phosphogalactonate (KDPGal) to pyruvate and D-glyceraldehyde-3-phosphate. In the synthetic direction, it catalyzes the addition of pyruvate to electrophilic aldehydes with re-facial selectivity. It can use a limited number of aldehyde substrates, including D-glyceraldehyde-3-phosphate (natural substrate), D-glyceraldehyde, glycolaldehyde, 2-pyridinecarboxaldehyde, D-ribose, D-erythrose and D-threose. It efficiently catalyzes aldol addition only using pyruvate as the nucleophilic component and accepts both stereochemical configurations at C2 of the electrophile. The sequence is that of 2-dehydro-3-deoxy-6-phosphogalactonate aldolase (dgoA) from Escherichia coli (strain K12).